A 200-amino-acid polypeptide reads, in one-letter code: MARYTGPAWKLSRRLGISLSGTGKELEKRPYAPGPHGPNQRKKLSEYGLQLQEKQKLRHMYGMTERQFRRTFDQAGKMPGKHGENFMILLEARLDNLVYRMGLARTRRAARQLVNHGHIMVDGARVDIPSYRVKPGQTISVREKSRNLAVIKEAMEVNNFVPEYLTFDADKLEATFTRHAERAELPAEINEALIVEFYSR.

The interval 22 to 42 (TGKELEKRPYAPGPHGPNQRK) is disordered. The region spanning 92 to 152 (ARLDNLVYRM…EKSRNLAVIK (61 aa)) is the S4 RNA-binding domain.

This sequence belongs to the universal ribosomal protein uS4 family. As to quaternary structure, part of the 30S ribosomal subunit. Contacts protein S5. The interaction surface between S4 and S5 is involved in control of translational fidelity.

Functionally, one of the primary rRNA binding proteins, it binds directly to 16S rRNA where it nucleates assembly of the body of the 30S subunit. Its function is as follows. With S5 and S12 plays an important role in translational accuracy. This Bacillus cytotoxicus (strain DSM 22905 / CIP 110041 / 391-98 / NVH 391-98) protein is Small ribosomal subunit protein uS4.